The following is a 239-amino-acid chain: Probable transcriptional regulatory protein Bcer98_0465 (239 aa).

The protein belongs to the TACO1 family. YeeN subfamily.

The protein resides in the cytoplasm. The chain is Probable transcriptional regulatory protein Bcer98_0465 from Bacillus cytotoxicus (strain DSM 22905 / CIP 110041 / 391-98 / NVH 391-98).